The primary structure comprises 576 residues: K(+)/H(+) antiporter NhaP2 (576 aa).

A run of 13 helical transmembrane segments spans residues Ile-6–Met-26, Ile-34–Leu-54, Tyr-58–Met-78, Val-87–Thr-107, Met-109–Val-129, Pro-163–Met-183, Phe-185–Gly-205, Leu-219–Ser-239, Leu-242–Thr-262, Val-271–Leu-291, Ile-299–Val-319, Trp-335–Met-355, and Leu-359–Val-379. The region spanning Ser-405 to Gln-486 is the RCK C-terminal domain.

It belongs to the monovalent cation:proton antiporter 1 (CPA1) transporter (TC 2.A.36) family. NhaP2 subfamily.

The protein resides in the cell inner membrane. The catalysed reaction is K(+)(in) + H(+)(out) = K(+)(out) + H(+)(in). K(+)/H(+) antiporter that extrudes potassium in exchange for external protons and maintains the internal concentration of potassium under toxic levels. In Shewanella baltica (strain OS223), this protein is K(+)/H(+) antiporter NhaP2.